Consider the following 301-residue polypeptide: Immune-associated nucleotide-binding protein 5 (301 aa).

The 204-residue stretch at 11-214 (EPVRNIVLVG…FTEENDLNEK (204 aa)) folds into the AIG1-type G domain. Residues 20 to 27 (GPTGNGKS) are G1. A GTP-binding site is contributed by 20-28 (GPTGNGKSS). The segment at 46–50 (CKTCK) is G2. The interval 63-66 (DTPG) is G3. A G4 region spans residues 133-136 (TGGD). A G5 region spans residues 172–174 (NNK). Asn-173 provides a ligand contact to GTP.

Belongs to the TRAFAC class TrmE-Era-EngA-EngB-Septin-like GTPase superfamily. AIG1/Toc34/Toc159-like paraseptin GTPase family. IAN subfamily. In terms of tissue distribution, expressed in pollen, cotyledons and lateral roots.

The chain is Immune-associated nucleotide-binding protein 5 from Arabidopsis thaliana (Mouse-ear cress).